Consider the following 75-residue polypeptide: Cruzioseptin-7 (75 aa).

An N-terminal signal peptide occupies residues 1–22 (MAKLKKSLFLVLFLGLVSLSIC). Positions 23-43 (EEEKREEENEEVQEDDDQSEE) are excised as a propeptide. Residues 25–44 (EKREEENEEVQEDDDQSEEK) are disordered. Residues 30–41 (ENEEVQEDDDQS) are compositionally biased toward acidic residues.

In terms of tissue distribution, expressed by the skin glands.

Its subcellular location is the secreted. In terms of biological role, has antimicrobial activity. The polypeptide is Cruzioseptin-7 (Cruziohyla calcarifer (Splendid leaf frog)).